Consider the following 209-residue polypeptide: Redox-sensing transcriptional repressor Rex (209 aa).

The segment at residues 16 to 55 (LYYRFIQNLSLSGKQRVSSAELSEAVKVDSATIRRDFSYF) is a DNA-binding region (H-T-H motif). 90-95 (GVGNLG) contacts NAD(+).

This sequence belongs to the transcriptional regulatory Rex family. Homodimer.

It localises to the cytoplasm. In terms of biological role, modulates transcription in response to changes in cellular NADH/NAD(+) redox state. This is Redox-sensing transcriptional repressor Rex from Bacillus cytotoxicus (strain DSM 22905 / CIP 110041 / 391-98 / NVH 391-98).